The primary structure comprises 233 residues: Bcl-2-like protein 1 (233 aa).

Residues 4-24 (SNRELVVDFLSYKLSQKGYSW) carry the BH4 motif. Residues 27–73 (FSDVEENRTEAPEETEPERETPSAINGNPSWHLADSPAVNGATGHSS) form a disordered region. S49 carries the post-translational modification Phosphoserine; by PLK3. At S62 the chain carries Phosphoserine; by CDK1. The BH3 motif lies at 86–100 (VKQALREAGDEFELR). The BH1 signature appears at 129-148 (ELFRDGVNWGRIVAFFSFGG). The BH2 motif lies at 180–195 (PWIQENGGWDTFVDLY). The helical transmembrane segment at 210 to 226 (FNRWFLTGMTVAGVVLL) threads the bilayer.

The protein belongs to the Bcl-2 family. In terms of assembly, homodimer. Interacts with BCL2L11. Interacts with BAD. Interacts with PGAM5. Interacts with HEBP2. Interacts with p53/TP53 and BBC3; interaction with BBC3 disrupts the interaction with p53/TP53. Interacts with ATP5F1A and ATP5F1B; the interactions mediate the association of isoform Bcl-X(L) with the mitochondrial membrane ATP synthase F(1)F(0) ATP synthase. Interacts with VDAC1. Interacts with BCL2L11 (via BH3). Interacts with RNF183. Interacts with GIMAP3/IAN4 and GIMAP5/IAN5. Interacts with GIMAP5 and HSPA8/HSC70; the interaction between HSPA8 and BCL2L1 is impaired in the absence of GIMAP5. Interacts with isoform 4 of CLU; this interaction releases and activates BAX and promotes cell death. As to quaternary structure, forms heterodimers with BAX, BAK or BCL2; heterodimerization with BAX does not seem to be required for anti-apoptotic activity. Interacts with isoform 1 of SIVA1; the interaction inhibits the anti-apoptotic activity. Interacts with IKZF3. Interacts with RTL10/BOP. Interacts with DNM1L and CLTA; DNM1L and BCL2L1 isoform BCL-X(L) may form a complex in synaptic vesicles that also contains clathrin and MFF. Interacts (via the loop between motifs BH4 and BH3) with NLRP1 (via LRR repeats), but not with NLRP2, NLRP3, NLRP4, PYCARD, nor MEFV. Interacts with BECN1. Post-translationally, proteolytically cleaved by caspases during apoptosis. The cleaved protein, lacking the BH4 motif, has pro-apoptotic activity. In terms of processing, phosphorylated on Ser-62 by CDK1. This phosphorylation is partial in normal mitotic cells, but complete in G2-arrested cells upon DNA-damage, thus promoting subsequent apoptosis probably by triggering caspases-mediated proteolysis. Phosphorylated by PLK3, leading to regulate the G2 checkpoint and progression to cytokinesis during mitosis. Phosphorylation at Ser-49 appears during the S phase and G2, disappears rapidly in early mitosis during prometaphase, metaphase and early anaphase, and re-appears during telophase and cytokinesis. Ubiquitinated by RNF183 during prolonged ER stress, leading to degradation by the proteosome. Expressed in most tissues. Bcl-X(beta) is specifically expressed in cerebellum, heart, and thymus. In the ovary, the predominant form is Bcl-X(L), with a small but detectable level of Bcl-X(S).

It localises to the mitochondrion inner membrane. It is found in the mitochondrion outer membrane. The protein localises to the mitochondrion matrix. Its subcellular location is the cytoplasmic vesicle. The protein resides in the secretory vesicle. It localises to the synaptic vesicle membrane. It is found in the cytoplasm. The protein localises to the cytosol. Its subcellular location is the cytoskeleton. The protein resides in the microtubule organizing center. It localises to the centrosome. It is found in the nucleus membrane. In terms of biological role, potent inhibitor of cell death. Inhibits activation of caspases. Appears to regulate cell death by blocking the voltage-dependent anion channel (VDAC) by binding to it and preventing the release of the caspase activator, CYC1, from the mitochondrial membrane. Also acts as a regulator of G2 checkpoint and progression to cytokinesis during mitosis. Isoform Bcl-X(L) also regulates presynaptic plasticity, including neurotransmitter release and recovery, number of axonal mitochondria as well as size and number of synaptic vesicle clusters. During synaptic stimulation, increases ATP availability from mitochondria through regulation of mitochondrial membrane ATP synthase F(1)F(0) activity and regulates endocytic vesicle retrieval in hippocampal neurons through association with DMN1L and stimulation of its GTPase activity in synaptic vesicles. May attenuate inflammation impairing NLRP1-inflammasome activation, hence CASP1 activation and IL1B release. Functionally, isoform Bcl-X(S) promotes apoptosis. The chain is Bcl-2-like protein 1 (Bcl2l1) from Rattus norvegicus (Rat).